Consider the following 157-residue polypeptide: Ribosomal RNA large subunit methyltransferase H (157 aa).

S-adenosyl-L-methionine contacts are provided by residues Leu-73, Gly-105, and 124–129 (LSQMTF).

It belongs to the RNA methyltransferase RlmH family. As to quaternary structure, homodimer.

Its subcellular location is the cytoplasm. The enzyme catalyses pseudouridine(1915) in 23S rRNA + S-adenosyl-L-methionine = N(3)-methylpseudouridine(1915) in 23S rRNA + S-adenosyl-L-homocysteine + H(+). Its function is as follows. Specifically methylates the pseudouridine at position 1915 (m3Psi1915) in 23S rRNA. This is Ribosomal RNA large subunit methyltransferase H from Flavobacterium psychrophilum (strain ATCC 49511 / DSM 21280 / CIP 103535 / JIP02/86).